Here is a 131-residue protein sequence, read N- to C-terminus: Snaclec A8 (131 aa).

Cystine bridges form between C2/C13, C30/C129, and C104/C121. The 122-residue stretch at 9 to 130 (HEGHCYKVFN…CGQPYRFTCE (122 aa)) folds into the C-type lectin domain.

Belongs to the snaclec family. Heterodimer; disulfide-linked. In terms of tissue distribution, expressed by the venom gland.

The protein resides in the secreted. In terms of biological role, interferes with one step of hemostasis (modulation of platelet aggregation, or coagulation cascade, for example). In Macrovipera lebetinus (Levantine viper), this protein is Snaclec A8.